The primary structure comprises 430 residues: 3-phosphoshikimate 1-carboxyvinyltransferase (430 aa).

Positions 20, 21, and 25 each coordinate 3-phosphoshikimate. K20 contributes to the phosphoenolpyruvate binding site. Phosphoenolpyruvate contacts are provided by G90 and R118. Positions 163, 164, 165, 191, 311, and 338 each coordinate 3-phosphoshikimate. A phosphoenolpyruvate-binding site is contributed by Q165. Catalysis depends on D311, which acts as the Proton acceptor. Positions 342 and 383 each coordinate phosphoenolpyruvate.

Belongs to the EPSP synthase family. In terms of assembly, monomer.

Its subcellular location is the cytoplasm. The catalysed reaction is 3-phosphoshikimate + phosphoenolpyruvate = 5-O-(1-carboxyvinyl)-3-phosphoshikimate + phosphate. It participates in metabolic intermediate biosynthesis; chorismate biosynthesis. Catalyzes the transfer of the enolpyruvyl moiety of phosphoenolpyruvate (PEP) to the 5-hydroxyl of shikimate-3-phosphate (S3P) to produce enolpyruvyl shikimate-3-phosphate and inorganic phosphate. In Methanosarcina acetivorans (strain ATCC 35395 / DSM 2834 / JCM 12185 / C2A), this protein is 3-phosphoshikimate 1-carboxyvinyltransferase.